The chain runs to 284 residues: AAAAVPRRGPRGGPGRSYTADAGYAPATPAAAGAAAGKATTEEQKLIEDINVGFKAAVAAAASVPAADKFKTFEAAFTSSSKAAAAKAPGLVPKLDAAYSVAYKAAVGATPEAKFDSFVASLTEALRVIAGALEVHAVKPVTEEPGMAKIPAGELQIIDKIDAAFKVAATAAATAPADDKFTVFEAAFNKAIKESTGGAYDTYKCIPSLEAAVKQAYAATVAAAPQVKYAVFEAALTKAITAMSEVQKVSQPATGAATVAAGAATTAAGAASGAATVAAGGYKV.

Residues 1-19 form the signal peptide; it reads AAAAVPRRGPRGGPGRSYT. A disordered region spans residues 1–21; it reads AAAAVPRRGPRGGPGRSYTAD.

This sequence belongs to the Poa p IX/Phl p VI allergen family. In terms of assembly, homodimer; disulfide-linked.

In terms of biological role, has ribonuclease activity. May be involved in host-pathogen interactions. The polypeptide is Pollen allergen Phl p 5b (Phleum pratense (Common timothy)).